Here is a 553-residue protein sequence, read N- to C-terminus: Rhodopsin kinase GRK7 (553 aa).

Ser36 carries the post-translational modification Phosphoserine; by PKA. Residues 56 to 176 (FNSLCEQQPI…LVSPFYDKFL (121 aa)) form the RGS domain. The Protein kinase domain occupies 191–454 (FEEFRVLGKG…SDDPRKHHFF (264 aa)). Residues 197 to 205 (LGKGGFGEV) and Lys220 contribute to the ATP site. The active-site Proton acceptor is the Asp316. Residues 455–520 (KTINFPRLEA…GAVPIAWQEE (66 aa)) form the AGC-kinase C-terminal domain. Cysteine methyl ester is present on Cys550. Cys550 carries the S-geranylgeranyl cysteine lipid modification. Positions 551–553 (LLL) are cleaved as a propeptide — removed in mature form.

Belongs to the protein kinase superfamily. AGC Ser/Thr protein kinase family. GPRK subfamily. As to quaternary structure, interacts (when prenylated) with PDE6D; this promotes release from membranes. In terms of processing, autophosphorylated in vitro at Ser-490. Phosphorylation at Ser-36 is regulated by light and activated by cAMP.

Its subcellular location is the membrane. The enzyme catalyses L-threonyl-[rhodopsin] + ATP = O-phospho-L-threonyl-[rhodopsin] + ADP + H(+). The catalysed reaction is L-seryl-[rhodopsin] + ATP = O-phospho-L-seryl-[rhodopsin] + ADP + H(+). With respect to regulation, inhibited by phosphorylation of Ser-36. In terms of biological role, retina-specific kinase involved in the shutoff of the photoresponse and adaptation to changing light conditions via cone opsin phosphorylation, including rhodopsin (RHO). This Sus scrofa (Pig) protein is Rhodopsin kinase GRK7 (GRK7).